The primary structure comprises 144 residues: Large ribosomal subunit protein uL15 (144 aa).

The tract at residues 1–48 (MQLNNLKPAAGSKHAKRRVGRGIGSGLGKTAGRGHKGQKSRSGGFHKV) is disordered. Residues 21–31 (RGIGSGLGKTA) show a composition bias toward gly residues.

The protein belongs to the universal ribosomal protein uL15 family. In terms of assembly, part of the 50S ribosomal subunit.

Binds to the 23S rRNA. This Cupriavidus pinatubonensis (strain JMP 134 / LMG 1197) (Cupriavidus necator (strain JMP 134)) protein is Large ribosomal subunit protein uL15.